A 272-amino-acid chain; its full sequence is Imidazole glycerol phosphate synthase subunit HisF (272 aa).

Catalysis depends on residues D11 and D130.

It belongs to the HisA/HisF family. In terms of assembly, heterodimer of HisH and HisF.

It localises to the cytoplasm. It carries out the reaction 5-[(5-phospho-1-deoxy-D-ribulos-1-ylimino)methylamino]-1-(5-phospho-beta-D-ribosyl)imidazole-4-carboxamide + L-glutamine = D-erythro-1-(imidazol-4-yl)glycerol 3-phosphate + 5-amino-1-(5-phospho-beta-D-ribosyl)imidazole-4-carboxamide + L-glutamate + H(+). It participates in amino-acid biosynthesis; L-histidine biosynthesis; L-histidine from 5-phospho-alpha-D-ribose 1-diphosphate: step 5/9. Functionally, IGPS catalyzes the conversion of PRFAR and glutamine to IGP, AICAR and glutamate. The HisF subunit catalyzes the cyclization activity that produces IGP and AICAR from PRFAR using the ammonia provided by the HisH subunit. The chain is Imidazole glycerol phosphate synthase subunit HisF from Methanococcus maripaludis (strain C5 / ATCC BAA-1333).